Here is a 510-residue protein sequence, read N- to C-terminus: UDP-N-acetylmuramyl-tripeptide synthetase (510 aa).

Serine 36 serves as a coordination point for UDP-N-acetyl-alpha-D-muramoyl-L-alanyl-D-glutamate. 113-119 lines the ATP pocket; sequence GTKGKTT. Residues 159–160, serine 186, and arginine 194 contribute to the UDP-N-acetyl-alpha-D-muramoyl-L-alanyl-D-glutamate site; that span reads TT. The residue at position 228 (lysine 228) is an N6-carboxylysine.

It belongs to the MurCDEF family. MurE subfamily. Post-translationally, carboxylation is probably crucial for Mg(2+) binding and, consequently, for the gamma-phosphate positioning of ATP.

Its subcellular location is the cytoplasm. It functions in the pathway cell wall biogenesis; peptidoglycan biosynthesis. Functionally, catalyzes the addition of an amino acid to the nucleotide precursor UDP-N-acetylmuramoyl-L-alanyl-D-glutamate (UMAG) in the biosynthesis of bacterial cell-wall peptidoglycan. The protein is UDP-N-acetylmuramyl-tripeptide synthetase of Ligilactobacillus salivarius (strain UCC118) (Lactobacillus salivarius).